A 180-amino-acid polypeptide reads, in one-letter code: Large ribosomal subunit protein uL6 (180 aa).

It belongs to the universal ribosomal protein uL6 family. In terms of assembly, part of the 50S ribosomal subunit.

Functionally, this protein binds to the 23S rRNA, and is important in its secondary structure. It is located near the subunit interface in the base of the L7/L12 stalk, and near the tRNA binding site of the peptidyltransferase center. The polypeptide is Large ribosomal subunit protein uL6 (Dictyoglomus turgidum (strain DSM 6724 / Z-1310)).